The following is a 779-amino-acid chain: Filament-like plant protein 1 (779 aa).

Residues 1 to 14 (MEKRKRESSERSFG) are compositionally biased toward basic and acidic residues. 3 disordered regions span residues 1 to 55 (MEKR…ETEK), 253 to 274 (ASFN…MDVS), and 315 to 336 (PETP…VVVP). A coiled-coil region spans residues 47-200 (VSLEVETEKE…KENVMLRHEL (154 aa)). Over residues 256–272 (NDHRSTDSHSDGGERMD) the composition is skewed to basic and acidic residues. The span at 324–336 (SGPESVTEEVVVP) shows a compositional bias: low complexity. The stretch at 337–674 (SENSLASEIE…ANCQKTIASL (338 aa)) forms a coiled coil. Over residues 718 to 731 (FMTRNHPESIKPTK) the composition is skewed to basic and acidic residues. Residues 718-764 (FMTRNHPESIKPTKETSPSSSSSTASAAVSMPVSTNRGSSEKNRNGF) are disordered. The span at 733 to 752 (TSPSSSSSTASAAVSMPVST) shows a compositional bias: low complexity.

This sequence belongs to the FPP family. Interacts with WPP/MAF proteins.

The polypeptide is Filament-like plant protein 1 (FPP1) (Arabidopsis thaliana (Mouse-ear cress)).